The primary structure comprises 79 residues: Small cysteine-rich protein 2 (79 aa).

A signal peptide spans 1–21; the sequence is MRSQHVLILLLGLVCASQVLG. Residues 22 to 35 constitute a propeptide that is removed on maturation; that stretch reads KHLTKVKAKALHYD.

It belongs to the Cnidaria small cysteine-rich protein (SCRiP) family. delta subfamily. Contains 4 disulfide bonds.

The protein resides in the secreted. It is found in the nematocyst. Functionally, this recombinant protein induces severe neurotoxicity on zebrafish larvae (Danio rerio) at a concentration of 230 mg/ml, but does not show toxicity when injected in blowfly larvae (Sarcophaga falculata). All fish incubated with this protein died within 200 minutes of exposure. Has also been claimed to be implied in calcification, but this function seems improbable. The polypeptide is Small cysteine-rich protein 2 (Acropora millepora (Staghorn coral)).